A 319-amino-acid polypeptide reads, in one-letter code: HPr kinase/phosphorylase (319 aa).

Residues histidine 146 and lysine 167 contribute to the active site. 161-168 (GESGLGKS) contributes to the ATP binding site. Residue serine 168 participates in Mg(2+) binding. Residue aspartate 185 is the Proton acceptor; for phosphorylation activity. Proton donor; for dephosphorylation activity of the active site. The important for the catalytic mechanism of both phosphorylation and dephosphorylation stretch occupies residues 209–218 (LEVRGIGLLD). Residue glutamate 210 participates in Mg(2+) binding. The active site involves arginine 252. Residues 273–278 (QVVAGR) form an important for the catalytic mechanism of dephosphorylation region.

Belongs to the HPrK/P family. Homohexamer. It depends on Mg(2+) as a cofactor.

It carries out the reaction [HPr protein]-L-serine + ATP = [HPr protein]-O-phospho-L-serine + ADP + H(+). It catalyses the reaction [HPr protein]-O-phospho-L-serine + phosphate + H(+) = [HPr protein]-L-serine + diphosphate. In terms of biological role, catalyzes the ATP- as well as the pyrophosphate-dependent phosphorylation of a specific serine residue in HPr, a phosphocarrier protein of the phosphoenolpyruvate-dependent sugar phosphotransferase system (PTS). HprK/P also catalyzes the pyrophosphate-producing, inorganic phosphate-dependent dephosphorylation (phosphorolysis) of seryl-phosphorylated HPr (P-Ser-HPr). This Variovorax paradoxus (strain S110) protein is HPr kinase/phosphorylase.